The primary structure comprises 364 residues: Mannitol-1-phosphate 5-dehydrogenase (364 aa).

NAD(+) is bound at residue 6–17; the sequence is VLHFGAGNIGRG.

The protein belongs to the mannitol dehydrogenase family.

The catalysed reaction is D-mannitol 1-phosphate + NAD(+) = beta-D-fructose 6-phosphate + NADH + H(+). In Mycoplasma pneumoniae (strain ATCC 29342 / M129 / Subtype 1) (Mycoplasmoides pneumoniae), this protein is Mannitol-1-phosphate 5-dehydrogenase (mtlD).